The primary structure comprises 411 residues: Dual-specificity RNA methyltransferase RlmN (411 aa).

Glu125 functions as the Proton acceptor in the catalytic mechanism. Positions 131–380 (EEGRGTLCVS…IRTPRGRDIL (250 aa)) constitute a Radical SAM core domain. Cys138 and Cys383 form a disulfide bridge. Cys145, Cys149, and Cys152 together coordinate [4Fe-4S] cluster. S-adenosyl-L-methionine contacts are provided by residues 209 to 210 (GE), Ser241, 263 to 265 (SLH), and Asn340. Cys383 acts as the S-methylcysteine intermediate in catalysis.

The protein belongs to the radical SAM superfamily. RlmN family. Requires [4Fe-4S] cluster as cofactor.

It is found in the cytoplasm. The catalysed reaction is adenosine(2503) in 23S rRNA + 2 reduced [2Fe-2S]-[ferredoxin] + 2 S-adenosyl-L-methionine = 2-methyladenosine(2503) in 23S rRNA + 5'-deoxyadenosine + L-methionine + 2 oxidized [2Fe-2S]-[ferredoxin] + S-adenosyl-L-homocysteine. It carries out the reaction adenosine(37) in tRNA + 2 reduced [2Fe-2S]-[ferredoxin] + 2 S-adenosyl-L-methionine = 2-methyladenosine(37) in tRNA + 5'-deoxyadenosine + L-methionine + 2 oxidized [2Fe-2S]-[ferredoxin] + S-adenosyl-L-homocysteine. Functionally, specifically methylates position 2 of adenine 2503 in 23S rRNA and position 2 of adenine 37 in tRNAs. m2A2503 modification seems to play a crucial role in the proofreading step occurring at the peptidyl transferase center and thus would serve to optimize ribosomal fidelity. The polypeptide is Dual-specificity RNA methyltransferase RlmN (Brucella anthropi (strain ATCC 49188 / DSM 6882 / CCUG 24695 / JCM 21032 / LMG 3331 / NBRC 15819 / NCTC 12168 / Alc 37) (Ochrobactrum anthropi)).